We begin with the raw amino-acid sequence, 241 residues long: 1-(5-phosphoribosyl)-5-[(5-phosphoribosylamino)methylideneamino] imidazole-4-carboxamide isomerase (241 aa).

Asp8 (proton acceptor) is an active-site residue. Asp131 acts as the Proton donor in catalysis.

This sequence belongs to the HisA/HisF family.

It is found in the cytoplasm. The catalysed reaction is 1-(5-phospho-beta-D-ribosyl)-5-[(5-phospho-beta-D-ribosylamino)methylideneamino]imidazole-4-carboxamide = 5-[(5-phospho-1-deoxy-D-ribulos-1-ylimino)methylamino]-1-(5-phospho-beta-D-ribosyl)imidazole-4-carboxamide. Its pathway is amino-acid biosynthesis; L-histidine biosynthesis; L-histidine from 5-phospho-alpha-D-ribose 1-diphosphate: step 4/9. The protein is 1-(5-phosphoribosyl)-5-[(5-phosphoribosylamino)methylideneamino] imidazole-4-carboxamide isomerase of Sorangium cellulosum (strain So ce56) (Polyangium cellulosum (strain So ce56)).